The primary structure comprises 338 residues: Lipoate-protein ligase A (338 aa).

The BPL/LPL catalytic domain occupies 29–216; it reads PTTQRVLFLW…AFFDYFGEQC (188 aa). Residues Arg71, 76–79, and Lys134 each bind ATP; that span reads GAVF. Lys134 contacts (R)-lipoate.

This sequence belongs to the LplA family. In terms of assembly, monomer.

The protein resides in the cytoplasm. The enzyme catalyses L-lysyl-[lipoyl-carrier protein] + (R)-lipoate + ATP = N(6)-[(R)-lipoyl]-L-lysyl-[lipoyl-carrier protein] + AMP + diphosphate + H(+). It functions in the pathway protein modification; protein lipoylation via exogenous pathway; protein N(6)-(lipoyl)lysine from lipoate: step 1/2. It participates in protein modification; protein lipoylation via exogenous pathway; protein N(6)-(lipoyl)lysine from lipoate: step 2/2. Its function is as follows. Catalyzes both the ATP-dependent activation of exogenously supplied lipoate to lipoyl-AMP and the transfer of the activated lipoyl onto the lipoyl domains of lipoate-dependent enzymes. The protein is Lipoate-protein ligase A of Pectobacterium carotovorum subsp. carotovorum (strain PC1).